The following is a 416-amino-acid chain: Meiotically up-regulated protein PB1A10.08 (416 aa).

It localises to the cytoplasm. May have a role in meiosis and sporulation. The polypeptide is Meiotically up-regulated protein PB1A10.08 (Schizosaccharomyces pombe (strain 972 / ATCC 24843) (Fission yeast)).